Here is a 244-residue protein sequence, read N- to C-terminus: 14-3-3 protein beta/alpha-B (244 aa).

Met1 is subject to N-acetylmethionine.

The protein belongs to the 14-3-3 family. Homodimer, and heterodimer with other family members.

The protein resides in the cytoplasm. Its function is as follows. Adapter protein implicated in the regulation of a large spectrum of both general and specialized signaling pathways. Binds to a large number of partners, usually by recognition of a phosphoserine or phosphothreonine motif. Binding generally results in the modulation of the activity of the binding partner. This chain is 14-3-3 protein beta/alpha-B (ywhab-b), found in Xenopus laevis (African clawed frog).